We begin with the raw amino-acid sequence, 262 residues long: Ribosome maturation factor RimP (262 aa).

Residues 197-262 (RELGVLPPPP…LGQTDPTEGD (66 aa)) form a disordered region. Positions 223–233 (KLPKAKLKAAK) are enriched in basic residues. Basic and acidic residues predominate over residues 240–254 (TKEHRLAAAERKRLG).

The protein belongs to the RimP family.

Its subcellular location is the cytoplasm. Functionally, required for maturation of 30S ribosomal subunits. This is Ribosome maturation factor RimP from Rhodopseudomonas palustris (strain BisB18).